A 341-amino-acid chain; its full sequence is uncharacterized protein (341 aa).

Residue 58 to 82 (ITGGSSGIGAAAAKKIAEAGGTVVL) coordinates NADP(+). Position 194 (serine 194) interacts with substrate. Residue tyrosine 207 is the Proton acceptor of the active site. Residues 309-329 (DSSAAKGSESQTDTSELDKRS) form a disordered region.

This sequence belongs to the short-chain dehydrogenases/reductases (SDR) family.

This is an uncharacterized protein from Mycobacterium bovis (strain ATCC BAA-935 / AF2122/97).